The chain runs to 458 residues: Phosphoglucosamine mutase (458 aa).

Residue Ser100 is the Phosphoserine intermediate of the active site. Mg(2+) contacts are provided by Ser100, Asp254, Asp256, and Asp258. Ser100 is modified (phosphoserine).

The protein belongs to the phosphohexose mutase family. Mg(2+) is required as a cofactor. Post-translationally, activated by phosphorylation.

It carries out the reaction alpha-D-glucosamine 1-phosphate = D-glucosamine 6-phosphate. Catalyzes the conversion of glucosamine-6-phosphate to glucosamine-1-phosphate. This is Phosphoglucosamine mutase from Nocardia farcinica (strain IFM 10152).